A 209-amino-acid chain; its full sequence is Lipopolysaccharide export system protein LptC (209 aa).

A helical membrane pass occupies residues 7-26 (NIRWNVILGVIALCALAWFY).

This sequence belongs to the LptC family. As to quaternary structure, component of the lipopolysaccharide transport and assembly complex. Interacts with LptA and the LptBFG transporter complex.

The protein localises to the cell inner membrane. Involved in the assembly of lipopolysaccharide (LPS). Required for the translocation of LPS from the inner membrane to the outer membrane. Facilitates the transfer of LPS from the inner membrane to the periplasmic protein LptA. Could be a docking site for LptA. This Haemophilus influenzae (strain ATCC 51907 / DSM 11121 / KW20 / Rd) protein is Lipopolysaccharide export system protein LptC.